We begin with the raw amino-acid sequence, 220 residues long: Urease accessory protein UreF (220 aa).

This sequence belongs to the UreF family. UreD, UreF and UreG form a complex that acts as a GTP-hydrolysis-dependent molecular chaperone, activating the urease apoprotein by helping to assemble the nickel containing metallocenter of UreC. The UreE protein probably delivers the nickel.

Its subcellular location is the cytoplasm. Functionally, required for maturation of urease via the functional incorporation of the urease nickel metallocenter. The sequence is that of Urease accessory protein UreF from Bordetella parapertussis (strain 12822 / ATCC BAA-587 / NCTC 13253).